The primary structure comprises 261 residues: 5'-nucleotidase SurE (261 aa).

Positions 8, 9, 39, and 91 each coordinate a divalent metal cation.

Belongs to the SurE nucleotidase family. A divalent metal cation is required as a cofactor.

The protein resides in the cytoplasm. It carries out the reaction a ribonucleoside 5'-phosphate + H2O = a ribonucleoside + phosphate. Nucleotidase that shows phosphatase activity on nucleoside 5'-monophosphates. This is 5'-nucleotidase SurE from Polaromonas naphthalenivorans (strain CJ2).